Consider the following 607-residue polypeptide: F-box protein At-B (607 aa).

The F-box domain maps to 9–47 (LAEEILKRLDLENLCSVACVSTTLRSAVVSGVLPSLTSL). 16 LRR repeats span residues 51 to 76 (VFSPDDETLNHVLRGCIGLSSLTLNC), 77 to 99 (LRLNAASVRGVLGPHLRELHLLR), 100 to 125 (CSLLSSTVLTYIGTLCPNLRVLTLEM), 130 to 155 (SPDVFQSNLTQMLNGCPYLESLQLNI), 228 to 253 (LDLISDRLIIAITGSLPQLVKLDLED), 262 to 286 (DNDLTYTGLQALGFCQQLTSLSLVR), 295 to 320 (FKRINDMGIFLLSEACKGLESVRLGG), 321 to 346 (FPKVSDAGFASLLHSCRNLKKFEVRG), 347 to 372 (AFLLSDLAFHDVTGSSCSLQEVRLST), 373 to 397 (CPLITSEAVKKLGLCGNLEVLDLGS), 398 to 422 (CKSISDSCLNSVSALRKLTSLNLAG), 424 to 447 (DVTDSGMLALGKSDVPITQLSLRG), 448 to 477 (CRRVSDRGISYLLNNEGTISKTLSTLDLGH), 478 to 503 (MPGISDRAIHTITHCCKALTELSIRS), 504 to 536 (CFHVTDSSIESLATWERQAEGGSKQLRKLNVHN), and 537 to 563 (CVSLTTGALRWLSKPSFAGLHWLGMGQ).

The polypeptide is F-box protein At-B (ATB) (Arabidopsis thaliana (Mouse-ear cress)).